The primary structure comprises 207 residues: Ribosomal RNA large subunit methyltransferase E (207 aa).

Residues Gly60, Trp62, Asp80, Asp96, and Asp121 each contribute to the S-adenosyl-L-methionine site. Lys161 acts as the Proton acceptor in catalysis.

This sequence belongs to the class I-like SAM-binding methyltransferase superfamily. RNA methyltransferase RlmE family.

It localises to the cytoplasm. It carries out the reaction uridine(2552) in 23S rRNA + S-adenosyl-L-methionine = 2'-O-methyluridine(2552) in 23S rRNA + S-adenosyl-L-homocysteine + H(+). Functionally, specifically methylates the uridine in position 2552 of 23S rRNA at the 2'-O position of the ribose in the fully assembled 50S ribosomal subunit. The polypeptide is Ribosomal RNA large subunit methyltransferase E (Ectopseudomonas mendocina (strain ymp) (Pseudomonas mendocina)).